A 1113-amino-acid chain; its full sequence is MDPCGDPAVPGGDCPQTRGPGLQGASGQEGPLQGTCVDSSHSEHEDRNRMSEELIMVVQEMKKYFPAERHTKPSTLDALNYALRCVHSVQANSDFFQSLGPRGAHQADVTVYSLEDLTALASEHTSKNTDTFAAVFSFLSGRLVHISEQAALILNSKRGFLKSVHFVDLLAPQDVRAFYAHTAPTQLPFWNNWTQRASQYECAPAKPFFCRICGGGDREKRHYSPFRILPYLVHVHSSAQPEPEPCCLTLVEKIHSGYEAPRIPVDKRIFTTTHTPGCVFLEVDERAVPLLGYLPQDLIGTSILTYLHPEDRPLMVAIHQKVLKYAGHPPFEHSPVRFCTQNGEYVILDSSWSSFVNPWSRKVSFIIGRHKVRTSPLNEDVFATRIKKAASNDKDIAELQEQIHKLLLQPVHASASSGYGSLGSSGSQEQHVSITSSSESSGHCPEEGQHEQMTLQQVYASVNKIKNVGQQLYIESMARSSVKPVAETCVEPQGGDEQKDFSSSQTLKNKSTTDTGSGGNLQQEQPSSSYQQMNCIDSVIRYLTSYSLPALKRKCISCTNTSSSSEEAKPIPEVDSSQRDTEQLLDIRKQETTGPSTDIEGGAARTLSTAALSVASGISQCSCSSTSGHAPPLQSESVAVACKPWALRTKASHLAAGGFKHVGLTAAVLSAHTQKEEQNYVDRFREKILTSPYGCYLQQESRNRAQYSCVQAGSTAKHSRCAGSERQKHKRKKLPAPVDTSSPGAHLCPHVTGLLPDEQHWGPSASPSPLGAGLAFPSALVVPSQTPYLLPSFPLQDMASQGVGVSAAWGAAAGCPPLSAGPQAVAAFPSAYVDTLMTIFLHNAPLFPLWPPSFSPYPSLGAAGSSELAPLVPAMAPNPEPTTSGHSQRRVEENWEAHSEELPFISSRSSSPLQLNLLQEEMPAPSESADAVRRGAGPDAKHHCVTGPSGSRSRHCTSGELATATAQQESAAASGSSASSIYFSSTDYASEVSENRQRPQDRQRDEALPGAAEESIWRMIERTPECVLMTYQVPERGREEVLKQDLEKLQSMEQQQPLFSPAQREELAKVRSWIHSHTAPQEGHLQSCVACEDRGSVGDTAEVLEQHPAEDTS.

The disordered stretch occupies residues M1–N48. The Nuclear export signal 1 motif lies at L54 to K63. 2 consecutive PAS domains span residues L120–L187 and Y258–K324. Positions H333–P376 constitute a PAC domain. The Nuclear export signal 3 signature appears at L399–L408. Residues G418–S427 show a composition bias toward low complexity. 5 disordered regions span residues G418–E451, V485–Y530, T561–D580, H718–S742, and L871–S906. 2 stretches are compositionally biased toward polar residues: residues Q428–S441 and F501–Y530. The interval L551 to H750 is CSNK1E binding domain. The segment covering E566 to D580 has biased composition (basic and acidic residues). The short motif at S719–P735 is the Nuclear localization signal element. Positions R889–E901 are enriched in basic and acidic residues. S907 is subject to Phosphoserine. Positions L913 to E920 match the Nuclear export signal 2 motif. The interval E921–G1010 is disordered. The span at A962–T986 shows a compositional bias: low complexity. The span at S993–A1007 shows a compositional bias: basic and acidic residues. Residues E1035–S1113 are CRY binding domain.

In terms of assembly, homodimer. Component of the circadian core oscillator, which includes the CRY proteins, CLOCK or NPAS2, BMAL1 or BMAL2, CSNK1D and/or CSNK1E, TIMELESS and the PER proteins. Interacts directly with PER1, PER2, CRY1, CRY2, and TIMELESS; interaction with CRY1 and CRY2 is weak and not rhythmic. Interacts with FBXW11 and BTRC. Phosphorylation by CSNK1E is weak and appears to require association with PER1 and translocation to the nucleus. In terms of processing, ubiquitinated. In terms of tissue distribution, widely expressed. Expressed in heart, brain, lung, liver, skeletal muscle, testis, and at low level in the spleen and kidney. In brain, mainly found in the SCN, hippocampus, piriform cortex, and cerebellum. Lower level of expression in the neocortex. Expression exhibits synchronous oscillations in liver, skeletal muscle and testis.

Its subcellular location is the cytoplasm. The protein localises to the nucleus. Originally described as a core component of the circadian clock. The circadian clock, an internal time-keeping system, regulates various physiological processes through the generation of approximately 24 hour circadian rhythms in gene expression, which are translated into rhythms in metabolism and behavior. It is derived from the Latin roots 'circa' (about) and 'diem' (day) and acts as an important regulator of a wide array of physiological functions including metabolism, sleep, body temperature, blood pressure, endocrine, immune, cardiovascular, and renal function. Consists of two major components: the central clock, residing in the suprachiasmatic nucleus (SCN) of the brain, and the peripheral clocks that are present in nearly every tissue and organ system. Both the central and peripheral clocks can be reset by environmental cues, also known as Zeitgebers (German for 'timegivers'). The predominant Zeitgeber for the central clock is light, which is sensed by retina and signals directly to the SCN. The central clock entrains the peripheral clocks through neuronal and hormonal signals, body temperature and feeding-related cues, aligning all clocks with the external light/dark cycle. Circadian rhythms allow an organism to achieve temporal homeostasis with its environment at the molecular level by regulating gene expression to create a peak of protein expression once every 24 hours to control when a particular physiological process is most active with respect to the solar day. Transcription and translation of core clock components (CLOCK, NPAS2, BMAL1, BMAL2, PER1, PER2, PER3, CRY1 and CRY2) plays a critical role in rhythm generation, whereas delays imposed by post-translational modifications (PTMs) are important for determining the period (tau) of the rhythms (tau refers to the period of a rhythm and is the length, in time, of one complete cycle). A diurnal rhythm is synchronized with the day/night cycle, while the ultradian and infradian rhythms have a period shorter and longer than 24 hours, respectively. Disruptions in the circadian rhythms contribute to the pathology of cardiovascular diseases, cancer, metabolic syndromes and aging. A transcription/translation feedback loop (TTFL) forms the core of the molecular circadian clock mechanism. Transcription factors, CLOCK or NPAS2 and BMAL1 or BMAL2, form the positive limb of the feedback loop, act in the form of a heterodimer and activate the transcription of core clock genes and clock-controlled genes (involved in key metabolic processes), harboring E-box elements (5'-CACGTG-3') within their promoters. The core clock genes: PER1/2/3 and CRY1/2 which are transcriptional repressors form the negative limb of the feedback loop and interact with the CLOCK|NPAS2-BMAL1|BMAL2 heterodimer inhibiting its activity and thereby negatively regulating their own expression. This heterodimer also activates nuclear receptors NR1D1, NR1D2, RORA, RORB and RORG, which form a second feedback loop and which activate and repress BMAL1 transcription, respectively. Has a redundant role with the other PER proteins PER1 and PER2 and is not essential for the circadian rhythms maintenance. In contrast, plays an important role in sleep-wake timing and sleep homeostasis probably through the transcriptional regulation of sleep homeostasis-related genes, without influencing circadian parameters. Can bind heme. This is Period circadian protein homolog 3 (Per3) from Mus musculus (Mouse).